We begin with the raw amino-acid sequence, 414 residues long: COUP transcription factor 2 (414 aa).

A disordered region spans residues 1-72 (MAMVVSTWRD…PGGPGSDKQQ (72 aa)). Over residues 27–37 (PPVPGPPPGAP) the composition is skewed to pro residues. Residues 38-57 (HTPQTPGQGGPASTPAQTAA) show a composition bias toward low complexity. T51 bears the Phosphothreonine mark. Residues 58–67 (GGQGGPGGPG) are compositionally biased toward gly residues. Positions 76-151 (HIECVVCGDK…VGMRREAVQR (76 aa)) form a DNA-binding region, nuclear receptor. 2 consecutive NR C4-type zinc fingers follow at residues 79–99 (CVVC…CEGC) and 115–139 (CRAN…LKKC). The segment at 117 to 414 (ANRNCPIDQH…SFNWPYMAIQ (298 aa)) is interaction with ZFPM2. Residues 177-403 (YLSGYISLLL…TLIRDMLLSG (227 aa)) form the NR LBD domain. The tract at residues 337–414 (LQEKSQCALE…SFNWPYMAIQ (78 aa)) is important for dimerization.

Belongs to the nuclear hormone receptor family. NR2 subfamily. As to quaternary structure, interacts with SQSTM1. Binds DNA as a dimer; homodimer or heterodimer with NR2F6. Interacts with NCOA1, NCOA2, NCOA3 and PPARGC1A. Interacts with ZFPM2.

The protein resides in the nucleus. Its function is as follows. Ligand-activated transcription factor. Activated by high concentrations of 9-cis-retinoic acid and all-trans-retinoic acid, but not by dexamethasone, cortisol or progesterone (in vitro). Regulation of the apolipoprotein A-I gene transcription. Binds to DNA site A. May be required to establish ovary identity during early gonad development. This Bos taurus (Bovine) protein is COUP transcription factor 2 (NR2F2).